Consider the following 190-residue polypeptide: Xanthine phosphoribosyltransferase (190 aa).

Residues Leu-20 and Asn-27 each coordinate xanthine. 128–132 is a 5-phospho-alpha-D-ribose 1-diphosphate binding site; that stretch reads ANGEA. Lys-156 is a xanthine binding site.

It belongs to the purine/pyrimidine phosphoribosyltransferase family. Xpt subfamily. In terms of assembly, homodimer.

Its subcellular location is the cytoplasm. The catalysed reaction is XMP + diphosphate = xanthine + 5-phospho-alpha-D-ribose 1-diphosphate. It functions in the pathway purine metabolism; XMP biosynthesis via salvage pathway; XMP from xanthine: step 1/1. In terms of biological role, converts the preformed base xanthine, a product of nucleic acid breakdown, to xanthosine 5'-monophosphate (XMP), so it can be reused for RNA or DNA synthesis. In Clostridium botulinum (strain Eklund 17B / Type B), this protein is Xanthine phosphoribosyltransferase.